We begin with the raw amino-acid sequence, 764 residues long: Bifunctional type I diterpene synthase tndC (764 aa).

The tract at residues 1–324 (MEYRYSTVVD…CPRYHPWSSY (324 aa)) is terpene cyclase. Positions 92 and 96 each coordinate Mg(2+). Residues 92-96 (DDVTD) carry the DDXXD 1 motif. The short motif at 224-232 (NDLYSWQKE) is the NSE/DTE element. The tract at residues 325–761 (NERQLDWMKN…FQLRLILEML (437 aa)) is prenyltransferase. The segment at 377–403 (AVNGNGASHTSSIKGSTGGNGVTHSPV) is disordered. Over residues 381–391 (NGASHTSSIKG) the composition is skewed to polar residues. Isopentenyl diphosphate contacts are provided by Lys484, Arg487, and His516. Positions 523 and 527 each coordinate Mg(2+). The DDXXD 2 motif lies at 523–527 (DDLED). Arg532 lines the dimethylallyl diphosphate pocket. Arg533 provides a ligand contact to isopentenyl diphosphate. Lys610, Thr611, Gln646, Asn653, Lys663, and Lys673 together coordinate dimethylallyl diphosphate.

This sequence in the N-terminal section; belongs to the terpene synthase family. It in the C-terminal section; belongs to the FPP/GGPP synthase family.

The enzyme catalyses isopentenyl diphosphate + (2E,6E)-farnesyl diphosphate = (2E,6E,10E)-geranylgeranyl diphosphate + diphosphate. It carries out the reaction (2E,6E,10E)-geranylgeranyl diphosphate = talarodiene + diphosphate. Its pathway is secondary metabolite biosynthesis; terpenoid biosynthesis. Functionally, bifunctional type I diterpene synthase; part of the gene cluster that mediates the biosynthesis of talaronoid C, a fusicoccane diterpenoid with an unprecedented tricyclic 5/8/6 ring system. The first step in the pathway is performed by the fusicoccadiene synthase tndC that possesses both prenyl transferase and terpene cyclase activity, converting isopentenyl diphosphate and dimethylallyl diphosphate into geranylgeranyl diphosphate (GGDP) and further converting GGDP into talarodiene, a precursor for talaronoid C. The remaining enzymes from the cluster include the cytochrome P450 monooxygenase tndB, the aldehyde reductase tndE and the alcohol dehydrogenase tndF that are involved in the conversion of talarodiene into talaronoid C. In Aspergillus flavipes, this protein is Bifunctional type I diterpene synthase tndC.